A 573-amino-acid chain; its full sequence is E3 ubiquitin-protein ligase RNF168 (573 aa).

An RING-type zinc finger spans residues 16 to 55; that stretch reads CQICVEILFEPVTLPCNHTLCKPCFESTVEKASLCCPFCR. Ser70 carries the phosphoserine modification. An LR motif 1 motif is present at residues 110–128; it reads LSKPGELRREYEEEISKVE. The short motif at 143 to 151 is the UMI motif element; that stretch reads EEYIQKLLA. Disordered regions lie at residues 153–174 and 196–277; these read EEEEEKRQAEKRHREMEEQLKS and ASPL…EDMP. Residues 157–174 are compositionally biased toward basic and acidic residues; sequence EKRQAEKRHREMEEQLKS. The MIU motif 1 motif lies at 168-191; it reads MEEQLKSDEELARRLSLDINNFCE. Ser197 is modified (phosphoserine). Residue Lys210 forms a Glycyl lysine isopeptide (Lys-Gly) (interchain with G-Cter in SUMO2) linkage. Over residues 231-243 the composition is skewed to polar residues; the sequence is PKSQLGSASQSEV. Residues 245-261 are compositionally biased toward basic and acidic residues; sequence QEDRKSSMSKKIDDNSD. Position 363 is a phosphothreonine (Thr363). Ser416 is modified (phosphoserine). Positions 440 to 463 match the MIU motif 2 motif; that stretch reads RHKQEKQDRLLALQLQEEVDQEQM. Residues 456–528 form a disordered region; the sequence is EEVDQEQMRP…NHQQPSFKIQ (73 aa). The segment covering 461–470 has biased composition (basic and acidic residues); it reads EQMRPDRQKG. The LR motif 2 motif lies at 467 to 478; it reads RQKGSPDGYQLR. At Ser471 the chain carries Phosphoserine. Residues 494-519 are compositionally biased toward basic and acidic residues; it reads NSRDRNSKRQTELEQPKPRTDSKNEN. Lys530 participates in a covalent cross-link: Glycyl lysine isopeptide (Lys-Gly) (interchain with G-Cter in SUMO2). The segment at 540-573 is disordered; it reads NSTNDNCNVSKTAHSLQPSKSQKSIFQMFQRVTK.

The protein belongs to the RNF168 family. Monomer. Interacts with UBE2N/UBC13. Post-translationally, sumoylated with SUMO1 by PIAS4 in response to double-strand breaks (DSBs). In terms of processing, ubiquitinated.

The protein resides in the nucleus. The enzyme catalyses S-ubiquitinyl-[E2 ubiquitin-conjugating enzyme]-L-cysteine + [acceptor protein]-L-lysine = [E2 ubiquitin-conjugating enzyme]-L-cysteine + N(6)-ubiquitinyl-[acceptor protein]-L-lysine.. It participates in protein modification; protein ubiquitination. E3 ubiquitin-protein ligase required for accumulation of repair proteins to sites of DNA damage. Acts with UBE2N/UBC13 to amplify the RNF8-dependent histone ubiquitination. Recruited to sites of DNA damage at double-strand breaks (DSBs) by binding to ubiquitinated histone H2A and H2AX and amplifies the RNF8-dependent H2A ubiquitination, promoting the formation of 'Lys-63'-linked ubiquitin conjugates. This leads to concentrate ubiquitinated histones H2A and H2AX at DNA lesions to the threshold required for recruitment of TP53BP1 and BRCA1. Also recruited at DNA interstrand cross-links (ICLs) sites and promotes accumulation of 'Lys-63'-linked ubiquitination of histones H2A and H2AX, leading to recruitment of FAAP20 and Fanconi anemia (FA) complex, followed by interstrand cross-link repair. H2A ubiquitination also mediates the ATM-dependent transcriptional silencing at regions flanking DSBs in cis, a mechanism to avoid collision between transcription and repair intermediates. Also involved in class switch recombination in immune system, via its role in regulation of DSBs repair. Following DNA damage, promotes the ubiquitination and degradation of JMJD2A/KDM4A in collaboration with RNF8, leading to unmask H4K20me2 mark and promote the recruitment of TP53BP1 at DNA damage sites. Not able to initiate 'Lys-63'-linked ubiquitination in vitro; possibly due to partial occlusion of the UBE2N/UBC13-binding region. Catalyzes monoubiquitination of 'Lys-13' and 'Lys-15' of nucleosomal histone H2A (H2AK13Ub and H2AK15Ub, respectively). This is E3 ubiquitin-protein ligase RNF168 from Bos taurus (Bovine).